The chain runs to 111 residues: MEQNKDPQMISKHNSRLPIWVLSPREEQQARKNLKTETYKKCANFVQAMADCAKANGMKVFPTCDKQRDEMKSCLLFYQTDEKYLDGERDKIVLEKINKLEKLCQKQSSTK.

The 44-residue stretch at 39–82 (YKKCANFVQAMADCAKANGMKVFPTCDKQRDEMKSCLLFYQTDE) folds into the CHCH domain. Short sequence motifs (cx9C motif) lie at residues 42–52 (CANFVQAMADC) and 64–74 (CDKQRDEMKSC). 2 cysteine pairs are disulfide-bonded: Cys42–Cys74 and Cys52–Cys64.

Belongs to the CMC family.

The protein resides in the mitochondrion inner membrane. Functionally, required for mitochondrial cytochrome c oxidase (COX) assembly and respiration. Binds copper. May be involved in copper trafficking and distribution to mitochondrial COX and SOD1. This is COX assembly mitochondrial protein (CMC1) from Saccharomyces cerevisiae (strain RM11-1a) (Baker's yeast).